A 380-amino-acid chain; its full sequence is MDSPIQIFRGEPGPTCAPSACLPPNSSAWFPGWAEPDSNGSAGSEDAQLEPAHISPAIPVIITAVYSVVFVVGLVGNSLVMFVIIRYTKMKTATNIYIFNLALADALVTTTMPFQSTVYLMNSWPFGDVLCKIVISIDYYNMFTSIFTLTMMSVDRYIAVCHPVKALDFRTPLKAKIINICIWLLSSSVGISAIVLGGTKVREDVDVIECSLQFPDDDYSWWDLFMKICVFIFAFVIPVLIIIVCYTLMILRLKSVRLLSGSREKDRNLRRITRLVLVVVAVFVVCWTPIHIFILVEALGSTSHSTAALSSYYFCIALGYTNSSLNPILYAFLDENFKRCFRDFCFPLKMRMERQSTSRVRNTVQDPAYLRDIDGMNKPV.

Residues 1–57 (MDSPIQIFRGEPGPTCAPSACLPPNSSAWFPGWAEPDSNGSAGSEDAQLEPAHISPA) are Extracellular-facing. Residues Asn25 and Asn39 are each glycosylated (N-linked (GlcNAc...) asparagine). The chain crosses the membrane as a helical span at residues 58–85 (IPVIITAVYSVVFVVGLVGNSLVMFVII). At 86–95 (RYTKMKTATN) the chain is on the cytoplasmic side. The helical transmembrane segment at 96-119 (IYIFNLALADALVTTTMPFQSTVY) threads the bilayer. The Extracellular portion of the chain corresponds to 120 to 132 (LMNSWPFGDVLCK). Cys131 and Cys210 are disulfide-bonded. Residues 133 to 154 (IVISIDYYNMFTSIFTLTMMSV) traverse the membrane as a helical segment. The Cytoplasmic segment spans residues 155–173 (DRYIAVCHPVKALDFRTPL). A helical transmembrane segment spans residues 174–196 (KAKIINICIWLLSSSVGISAIVL). Over 197–222 (GGTKVREDVDVIECSLQFPDDDYSWW) the chain is Extracellular. The helical transmembrane segment at 223 to 247 (DLFMKICVFIFAFVIPVLIIIVCYT) threads the bilayer. The Cytoplasmic portion of the chain corresponds to 248-274 (LMILRLKSVRLLSGSREKDRNLRRITR). A helical membrane pass occupies residues 275–296 (LVLVVVAVFVVCWTPIHIFILV). At 297 to 311 (EALGSTSHSTAALSS) the chain is on the extracellular side. The chain crosses the membrane as a helical span at residues 312–333 (YYFCIALGYTNSSLNPILYAFL). Topologically, residues 334 to 380 (DENFKRCFRDFCFPLKMRMERQSTSRVRNTVQDPAYLRDIDGMNKPV) are cytoplasmic. The S-palmitoyl cysteine moiety is linked to residue Cys345.

The protein belongs to the G-protein coupled receptor 1 family. As to quaternary structure, interacts with NHERF1. Interacts with GABARAPL1. In terms of tissue distribution, detected in brain and placenta.

Its subcellular location is the cell membrane. Its function is as follows. G-protein coupled opioid receptor that functions as a receptor for endogenous alpha-neoendorphins and dynorphins, but has low affinity for beta-endorphins. Also functions as a receptor for various synthetic opioids and for the psychoactive diterpene salvinorin A. Ligand binding causes a conformation change that triggers signaling via guanine nucleotide-binding proteins (G proteins) and modulates the activity of down-stream effectors, such as adenylate cyclase. Signaling leads to the inhibition of adenylate cyclase activity. Inhibits neurotransmitter release by reducing calcium ion currents and increasing potassium ion conductance. Plays a role in the perception of pain. Plays a role in mediating reduced physical activity upon treatment with synthetic opioids. Plays a role in the regulation of salivation in response to synthetic opioids. May play a role in arousal and regulation of autonomic and neuroendocrine functions. The polypeptide is Kappa-type opioid receptor (OPRK1) (Homo sapiens (Human)).